Reading from the N-terminus, the 567-residue chain is Proline--tRNA ligase (567 aa).

The protein belongs to the class-II aminoacyl-tRNA synthetase family. ProS type 1 subfamily. In terms of assembly, homodimer.

The protein localises to the cytoplasm. The enzyme catalyses tRNA(Pro) + L-proline + ATP = L-prolyl-tRNA(Pro) + AMP + diphosphate. Catalyzes the attachment of proline to tRNA(Pro) in a two-step reaction: proline is first activated by ATP to form Pro-AMP and then transferred to the acceptor end of tRNA(Pro). As ProRS can inadvertently accommodate and process non-cognate amino acids such as alanine and cysteine, to avoid such errors it has two additional distinct editing activities against alanine. One activity is designated as 'pretransfer' editing and involves the tRNA(Pro)-independent hydrolysis of activated Ala-AMP. The other activity is designated 'posttransfer' editing and involves deacylation of mischarged Ala-tRNA(Pro). The misacylated Cys-tRNA(Pro) is not edited by ProRS. This chain is Proline--tRNA ligase, found in Staphylococcus aureus (strain MRSA252).